The following is a 594-amino-acid chain: Probable pectinesterase/pectinesterase inhibitor 33 (594 aa).

The N-terminal stretch at 1–22 is a signal peptide; that stretch reads MLRGIFHICLLASFLLLPFSSA. The disordered stretch occupies residues 28 to 75; that stretch reads FTGGTDAPPPWDHNVSPPPETAPSPTPTSSPSTTSPPSPGPVAAPSPI. Residues 34-71 are compositionally biased toward pro residues; it reads APPPWDHNVSPPPETAPSPTPTSSPSTTSPPSPGPVAA. Residues asparagine 77, asparagine 170, asparagine 213, and asparagine 226 are each glycosylated (N-linked (GlcNAc...) asparagine). Positions 78 to 237 are pectinesterase inhibitor 33; it reads GSVSGDMTWW…SDLIGNCLAV (160 aa). Residues 280-581 are pectinesterase 33; sequence HLVVAQDRSG…TVGSLIAGGS (302 aa). The substrate site is built by threonine 356 and glutamine 386. The active-site Proton donor; for pectinesterase activity is aspartate 409. Residues cysteine 423 and cysteine 443 are joined by a disulfide bond. The Nucleophile; for pectinesterase activity role is filled by aspartate 430. 2 residues coordinate substrate: arginine 498 and tryptophan 500.

The protein in the N-terminal section; belongs to the PMEI family. In the C-terminal section; belongs to the pectinesterase family. In terms of tissue distribution, expressed in siliques.

The protein resides in the secreted. The protein localises to the cell wall. The enzyme catalyses [(1-&gt;4)-alpha-D-galacturonosyl methyl ester](n) + n H2O = [(1-&gt;4)-alpha-D-galacturonosyl](n) + n methanol + n H(+). It participates in glycan metabolism; pectin degradation; 2-dehydro-3-deoxy-D-gluconate from pectin: step 1/5. Acts in the modification of cell walls via demethylesterification of cell wall pectin. The chain is Probable pectinesterase/pectinesterase inhibitor 33 (PME33) from Arabidopsis thaliana (Mouse-ear cress).